Reading from the N-terminus, the 153-residue chain is ATP synthase subunit b' (153 aa).

The chain crosses the membrane as a helical span at residues 20–40; that stretch reads TLPLMAVQVVLLTFILNALFF.

This sequence belongs to the ATPase B chain family. As to quaternary structure, F-type ATPases have 2 components, F(1) - the catalytic core - and F(0) - the membrane proton channel. F(1) has five subunits: alpha(3), beta(3), gamma(1), delta(1), epsilon(1). F(0) has four main subunits: a(1), b(1), b'(1) and c(10-14). The alpha and beta chains form an alternating ring which encloses part of the gamma chain. F(1) is attached to F(0) by a central stalk formed by the gamma and epsilon chains, while a peripheral stalk is formed by the delta, b and b' chains.

It localises to the cellular thylakoid membrane. In terms of biological role, f(1)F(0) ATP synthase produces ATP from ADP in the presence of a proton or sodium gradient. F-type ATPases consist of two structural domains, F(1) containing the extramembraneous catalytic core and F(0) containing the membrane proton channel, linked together by a central stalk and a peripheral stalk. During catalysis, ATP synthesis in the catalytic domain of F(1) is coupled via a rotary mechanism of the central stalk subunits to proton translocation. Functionally, component of the F(0) channel, it forms part of the peripheral stalk, linking F(1) to F(0). The b'-subunit is a diverged and duplicated form of b found in plants and photosynthetic bacteria. This is ATP synthase subunit b' from Prochlorococcus marinus (strain NATL1A).